The primary structure comprises 198 residues: Recombination protein RecR (198 aa).

The C4-type zinc finger occupies 58 to 73; that stretch reads CSTCGNFTDTDPCALC. One can recognise a Toprim domain in the interval 81–175; sequence STICVVEQPK…KVTRIAAGIP (95 aa).

The protein belongs to the RecR family.

Functionally, may play a role in DNA repair. It seems to be involved in an RecBC-independent recombinational process of DNA repair. It may act with RecF and RecO. In Clostridium botulinum (strain Alaska E43 / Type E3), this protein is Recombination protein RecR.